The following is a 307-amino-acid chain: Aspartate carbamoyltransferase catalytic subunit (307 aa).

Residues R59 and T60 each coordinate carbamoyl phosphate. An L-aspartate-binding site is contributed by K87. 3 residues coordinate carbamoyl phosphate: R109, H137, and Q140. L-aspartate-binding residues include R173 and R223. G266 and P267 together coordinate carbamoyl phosphate.

This sequence belongs to the aspartate/ornithine carbamoyltransferase superfamily. ATCase family. As to quaternary structure, heterododecamer (2C3:3R2) of six catalytic PyrB chains organized as two trimers (C3), and six regulatory PyrI chains organized as three dimers (R2).

It carries out the reaction carbamoyl phosphate + L-aspartate = N-carbamoyl-L-aspartate + phosphate + H(+). It participates in pyrimidine metabolism; UMP biosynthesis via de novo pathway; (S)-dihydroorotate from bicarbonate: step 2/3. Its function is as follows. Catalyzes the condensation of carbamoyl phosphate and aspartate to form carbamoyl aspartate and inorganic phosphate, the committed step in the de novo pyrimidine nucleotide biosynthesis pathway. The protein is Aspartate carbamoyltransferase catalytic subunit of Helicobacter pylori (strain G27).